Here is a 564-residue protein sequence, read N- to C-terminus: Formate--tetrahydrofolate ligase (564 aa).

69–76 (TPAGEGKS) contributes to the ATP binding site.

Belongs to the formate--tetrahydrofolate ligase family.

The enzyme catalyses (6S)-5,6,7,8-tetrahydrofolate + formate + ATP = (6R)-10-formyltetrahydrofolate + ADP + phosphate. Its pathway is one-carbon metabolism; tetrahydrofolate interconversion. In Renibacterium salmoninarum (strain ATCC 33209 / DSM 20767 / JCM 11484 / NBRC 15589 / NCIMB 2235), this protein is Formate--tetrahydrofolate ligase.